The sequence spans 169 residues: Type II secretion system protein H (169 aa).

A propeptide spans 1–29 (leader sequence); sequence MRVARLPLLHPHRAAPVVRRQLRGSSLLE. Position 30 is an N-methylmethionine (methionine 30). The chain crosses the membrane as a helical span at residues 32-52; it reads LVIALIALAGVLAAAALTGGI.

The protein belongs to the GSP H family. Type II secretion is composed of four main components: the outer membrane complex, the inner membrane complex, the cytoplasmic secretion ATPase and the periplasm-spanning pseudopilus. Interacts with core component XpsG. Interacts with minor pseudopilins XpsI and XpsJ. In terms of processing, cleaved by prepilin peptidase. Post-translationally, methylated by prepilin peptidase at the amino group of the N-terminal phenylalanine once the leader sequence is cleaved by prepilin peptidase.

It localises to the cell inner membrane. In terms of biological role, component of the type II secretion system required for the energy-dependent secretion of extracellular factors such as proteases and toxins from the periplasm. Part of the pseudopilus tip complex that is critical for the recognition and binding of secretion substrates. The protein is Type II secretion system protein H (xpsH) of Xanthomonas campestris pv. campestris (strain ATCC 33913 / DSM 3586 / NCPPB 528 / LMG 568 / P 25).